A 218-amino-acid chain; its full sequence is N-(5'-phosphoribosyl)anthranilate isomerase (218 aa).

It belongs to the TrpF family.

It carries out the reaction N-(5-phospho-beta-D-ribosyl)anthranilate = 1-(2-carboxyphenylamino)-1-deoxy-D-ribulose 5-phosphate. Its pathway is amino-acid biosynthesis; L-tryptophan biosynthesis; L-tryptophan from chorismate: step 3/5. The polypeptide is N-(5'-phosphoribosyl)anthranilate isomerase (Halobacterium salinarum (strain ATCC 29341 / DSM 671 / R1)).